A 354-amino-acid chain; its full sequence is MTALKNDRFLRALLKQPVDVTPVWMMRQAGRYLPEYRASRAKAGDFMSLCMNPQFACEVTLQPLERYPLDAAILFSDILTIPDAMGLGLYFETGEGPRFKKVISTPADIEALLIPDPQKDLGYVMDAVSTIRRELNGRVPLIGFSGSPWTLATYMVEGGSSKDFRKTKAMAYDNPQALHLLLDKLAQSVTSYLNGQILAGAQAVQIFDTWGGNLSAAAYQEFSLAYMRKIVSGLIREHDGRKVPVILFTKNGGLWLESIAEAGADALGLDWTCEIGDARRRVGDKVALQGNMDPTVLYAKPEAIRNEVARILASYGKGTGHVFNLGHGITPEVDPEHAGVFINAVHELSAQYHQ.

Substrate contacts are provided by residues 27 to 31, Asp77, Tyr154, Thr209, and His327; that span reads RQAGR.

This sequence belongs to the uroporphyrinogen decarboxylase family. As to quaternary structure, homodimer.

Its subcellular location is the cytoplasm. The catalysed reaction is uroporphyrinogen III + 4 H(+) = coproporphyrinogen III + 4 CO2. It participates in porphyrin-containing compound metabolism; protoporphyrin-IX biosynthesis; coproporphyrinogen-III from 5-aminolevulinate: step 4/4. Catalyzes the decarboxylation of four acetate groups of uroporphyrinogen-III to yield coproporphyrinogen-III. This chain is Uroporphyrinogen decarboxylase, found in Pseudomonas putida (strain W619).